Reading from the N-terminus, the 67-residue chain is Large ribosomal subunit protein bL31 (67 aa).

Zn(2+)-binding residues include Cys-16, Cys-18, Cys-36, and Cys-39.

It belongs to the bacterial ribosomal protein bL31 family. Type A subfamily. In terms of assembly, part of the 50S ribosomal subunit. The cofactor is Zn(2+).

Its function is as follows. Binds the 23S rRNA. This is Large ribosomal subunit protein bL31 from Aliarcobacter butzleri (strain RM4018) (Arcobacter butzleri).